The chain runs to 299 residues: MGLCKCPKRLVTNQFCFEHRVNVCEHCMVQSHPKCIVQSYLQWLRDSDYISNCTLCGTTLEQGDCVRLVCYHVFHWDCLNARQAALPANTAPRGHQCPACSVEIFPNANLVSPVADALKSFLSQVNWGRNGLGLALLSEEQSSSLKAIKPKVASQAAVSNMTKVHHIHSGGERERTKPNGHDAVSPHSVLLMDAFNPPSAGDYASSRRPLLPRQSPIGGTDRDDNKYQRRTPAELFSRWTRRFYAPSSRPPWRRTWFLVTAGILAFVLFVYLMAWLGRGGSDAVDEGWNNPNPQPNHYE.

A B box-type; degenerate zinc finger spans residues 1-43 (MGLCKCPKRLVTNQFCFEHRVNVCEHCMVQSHPKCIVQSYLQW). The segment at 53 to 101 (CTLCGTTLEQGDCVRLVCYHVFHWDCLNARQAALPANTAPRGHQCPACS) adopts an RING-type; atypical zinc-finger fold. The disordered stretch occupies residues 200–231 (AGDYASSRRPLLPRQSPIGGTDRDDNKYQRRT). A Phosphoserine modification is found at S215. The helical transmembrane segment at 256 to 276 (WFLVTAGILAFVLFVYLMAWL) threads the bilayer.

The protein belongs to the ZFPL1 family.

Its subcellular location is the membrane. This Drosophila melanogaster (Fruit fly) protein is Zinc finger protein-like 1 homolog.